The following is a 434-amino-acid chain: Trigger factor (434 aa).

The PPIase FKBP-type domain occupies 160-245 (GDKVKMNFVG…LTEVQAAQLP (86 aa)).

This sequence belongs to the FKBP-type PPIase family. Tig subfamily.

It is found in the cytoplasm. The enzyme catalyses [protein]-peptidylproline (omega=180) = [protein]-peptidylproline (omega=0). Functionally, involved in protein export. Acts as a chaperone by maintaining the newly synthesized protein in an open conformation. Functions as a peptidyl-prolyl cis-trans isomerase. The sequence is that of Trigger factor from Shewanella denitrificans (strain OS217 / ATCC BAA-1090 / DSM 15013).